The chain runs to 209 residues: ATP-dependent dethiobiotin synthetase BioD (209 aa).

13-18 (DVGKTV) is an ATP binding site. Thr-17 serves as a coordination point for Mg(2+). Lys-33 is an active-site residue. Residue Glu-100 coordinates Mg(2+). Residues 100-103 (EGAG) and 184-186 (PRL) contribute to the ATP site.

It belongs to the dethiobiotin synthetase family. In terms of assembly, homodimer. Mg(2+) is required as a cofactor.

Its subcellular location is the cytoplasm. It carries out the reaction (7R,8S)-7,8-diammoniononanoate + CO2 + ATP = (4R,5S)-dethiobiotin + ADP + phosphate + 3 H(+). The protein operates within cofactor biosynthesis; biotin biosynthesis; biotin from 7,8-diaminononanoate: step 1/2. Its function is as follows. Catalyzes a mechanistically unusual reaction, the ATP-dependent insertion of CO2 between the N7 and N8 nitrogen atoms of 7,8-diaminopelargonic acid (DAPA, also called 7,8-diammoniononanoate) to form a ureido ring. This chain is ATP-dependent dethiobiotin synthetase BioD, found in Rhizorhabdus wittichii (strain DSM 6014 / CCUG 31198 / JCM 15750 / NBRC 105917 / EY 4224 / RW1) (Sphingomonas wittichii).